The following is a 185-amino-acid chain: Serine/arginine-rich splicing factor RSZ21 (185 aa).

The 72-residue stretch at 2 to 73 (ARLYVGNLDP…WRVELSRNSS (72 aa)) folds into the RRM domain. The segment at 86-103 (MKCYECGETGHFARECRL) adopts a CCHC-type zinc-finger fold. The disordered stretch occupies residues 104-185 (RIGPGGLGSG…DGGRYRRSRS (82 aa)). The segment covering 113–123 (GKRRSRSRSRS) has biased composition (basic residues). 2 stretches are compositionally biased toward low complexity: residues 124–138 (RSPQ…GRRS) and 151–162 (VSPVRGRSYSRS).

The protein belongs to the splicing factor SR family. Extensively phosphorylated on serine residues in the RS domain. Expressed in roots, leaves and immature seeds.

The protein resides in the nucleus. Functionally, involved in pre-mRNA splicing. This Oryza sativa subsp. japonica (Rice) protein is Serine/arginine-rich splicing factor RSZ21 (RSZP21).